A 201-amino-acid chain; its full sequence is IMP cyclohydrolase (201 aa).

The protein belongs to the archaeal IMP cyclohydrolase family.

The catalysed reaction is IMP + H2O = 5-formamido-1-(5-phospho-D-ribosyl)imidazole-4-carboxamide. Its pathway is purine metabolism; IMP biosynthesis via de novo pathway; IMP from 5-formamido-1-(5-phospho-D-ribosyl)imidazole-4-carboxamide: step 1/1. Its function is as follows. Catalyzes the cyclization of 5-formylamidoimidazole-4-carboxamide ribonucleotide to IMP. In Methanococcus maripaludis (strain C7 / ATCC BAA-1331), this protein is IMP cyclohydrolase.